Here is a 58-residue protein sequence, read N- to C-terminus: Large ribosomal subunit protein bL33 (58 aa).

This sequence belongs to the bacterial ribosomal protein bL33 family.

In Brachyspira hyodysenteriae (strain ATCC 49526 / WA1), this protein is Large ribosomal subunit protein bL33.